The primary structure comprises 842 residues: Elongation factor 2 (842 aa).

Residues 17–346 (TNVRNMSVIA…MIVLHLPSPV (330 aa)) enclose the tr-type G domain. GTP is bound by residues 26 to 33 (AHVDHGKS), 158 to 161 (NKVD), and 213 to 215 (SGL). Lys-509 is modified (N6,N6,N6-trimethyllysine; by EFM3; alternate). At Lys-509 the chain carries N6,N6-dimethyllysine; by EFM3; alternate. N6-methyllysine; by EFM3; alternate is present on Lys-509. Residue Ser-579 is modified to Phosphoserine. The residue at position 613 (Lys-613) is an N6,N6-dimethyllysine; by EFM2; alternate. Lys-613 carries the N6-methyllysine; by EFM2; alternate modification. His-699 bears the Diphthamide mark. A phosphothreonine mark is found at Thr-713 and Thr-763. Lys-841 is covalently cross-linked (Glycyl lysine isopeptide (Lys-Gly) (interchain with G-Cter in ubiquitin)).

It belongs to the TRAFAC class translation factor GTPase superfamily. Classic translation factor GTPase family. EF-G/EF-2 subfamily. Binds to 80S ribosomes. Actively translating ribosomes show mutually exclusive binding of eIF5a (HYP2 or ANB1) and EFT1/eEF2. Interacts with the 40S ribosomal subunit protein RPL9A; the interaction is direct. Interacts with the 60S ribosomal subunit proteins RPL12A; the interaction is direct. Interacts with RPS23A; the interaction is direct. Interacts with 18S rRNA; the interaction is direct. Interacts with 25S rRNA; the interaction is direct. Interacts with RPL0. Interacts with STM1; promoting ribosome inactivation. In terms of processing, (Microbial infection) Diphthamide can be ADP-ribosylated by diphtheria toxin and by Pseudomonas exotoxin A, thus abolishing its function.

The protein localises to the cytoplasm. The catalysed reaction is GTP + H2O = GDP + phosphate + H(+). Its pathway is protein biosynthesis; polypeptide chain elongation. Its activity is regulated as follows. Inhibited by fusidic acid and sordarin, which prevent the release of eEF2 from the ribosome after the translocation step. While fusidic acid acts on all eukaryotic eEF2, sordarin specifically binds and inhibits only selected fungal eEF2. Its function is as follows. Catalyzes the GTP-dependent ribosomal translocation step during translation elongation. During this step, the ribosome changes from the pre-translocational (PRE) to the post-translocational (POST) state as the newly formed A-site-bound peptidyl-tRNA and P-site-bound deacylated tRNA move to the P and E sites, respectively. Catalyzes the coordinated movement of the two tRNA molecules, the mRNA and conformational changes in the ribosome. This is Elongation factor 2 (EFT1) from Saccharomyces cerevisiae (strain ATCC 204508 / S288c) (Baker's yeast).